The sequence spans 395 residues: Elongation factor Tu (395 aa).

A tr-type G domain is found at 10–204 (KSHVNVGTLG…AVDEYIPTPE (195 aa)). The interval 19–26 (GHVDHGKT) is G1. Position 19–26 (19–26 (GHVDHGKT)) interacts with GTP. Threonine 26 lines the Mg(2+) pocket. Positions 60-64 (GITIS) are G2. A G3 region spans residues 81 to 84 (DCPG). Residues 81–85 (DCPGH) and 136–139 (NKTD) contribute to the GTP site. Positions 136–139 (NKTD) are G4. A G5 region spans residues 174-176 (SAL).

This sequence belongs to the TRAFAC class translation factor GTPase superfamily. Classic translation factor GTPase family. EF-Tu/EF-1A subfamily. Monomer.

The protein resides in the cytoplasm. The catalysed reaction is GTP + H2O = GDP + phosphate + H(+). Its function is as follows. GTP hydrolase that promotes the GTP-dependent binding of aminoacyl-tRNA to the A-site of ribosomes during protein biosynthesis. In Oceanobacillus iheyensis (strain DSM 14371 / CIP 107618 / JCM 11309 / KCTC 3954 / HTE831), this protein is Elongation factor Tu.